Here is a 676-residue protein sequence, read N- to C-terminus: Capsid vertex component 1 (676 aa).

Residues 253-264 (HPVRPSSSRVAS) are compositionally biased toward low complexity. The interval 253–308 (HPVRPSSSRVASGLLQSAKGHGAQTSNTDPINNGSFDGVLEPPGQGRFTGKKNNSS) is disordered. Polar residues predominate over residues 275 to 287 (AQTSNTDPINNGS).

This sequence belongs to the herpesviridae CVC1 protein family. Interacts (via C-terminus) with capsid vertex component 2/CVC2.

Its subcellular location is the virion. It localises to the host nucleus. Its function is as follows. Capsid vertex-specific component that plays a role during viral DNA encapsidation, assuring correct genome cleavage and presumably stabilizing capsids that contain full-length viral genomes. The sequence is that of Capsid vertex component 1 from Varicella-zoster virus (strain Dumas) (HHV-3).